We begin with the raw amino-acid sequence, 274 residues long: 2,3,4,5-tetrahydropyridine-2,6-dicarboxylate N-succinyltransferase (274 aa).

Arg-104 and Asp-141 together coordinate substrate.

It belongs to the transferase hexapeptide repeat family. As to quaternary structure, homotrimer.

The protein localises to the cytoplasm. The enzyme catalyses (S)-2,3,4,5-tetrahydrodipicolinate + succinyl-CoA + H2O = (S)-2-succinylamino-6-oxoheptanedioate + CoA. The protein operates within amino-acid biosynthesis; L-lysine biosynthesis via DAP pathway; LL-2,6-diaminopimelate from (S)-tetrahydrodipicolinate (succinylase route): step 1/3. In Shewanella amazonensis (strain ATCC BAA-1098 / SB2B), this protein is 2,3,4,5-tetrahydropyridine-2,6-dicarboxylate N-succinyltransferase.